A 164-amino-acid polypeptide reads, in one-letter code: Large ribosomal subunit protein uL15 (164 aa).

Residues 1–14 (MKLNEIQDNPGSSK) show a composition bias toward polar residues. The disordered stretch occupies residues 1–35 (MKLNEIQDNPGSSKSRMRVGRGIGSGKGKTCGRGV). The segment covering 21–35 (RGIGSGKGKTCGRGV) has biased composition (gly residues).

This sequence belongs to the universal ribosomal protein uL15 family. As to quaternary structure, part of the 50S ribosomal subunit.

Binds to the 23S rRNA. The protein is Large ribosomal subunit protein uL15 of Methylocella silvestris (strain DSM 15510 / CIP 108128 / LMG 27833 / NCIMB 13906 / BL2).